We begin with the raw amino-acid sequence, 515 residues long: 2-isopropylmalate synthase (515 aa).

In terms of domain architecture, Pyruvate carboxyltransferase spans 5 to 267 (VIIFDTTLRD…HTNLKHDEIH (263 aa)). Residues Asp14, His202, His204, and Asn238 each coordinate Mn(2+). The tract at residues 392–515 (KLNYLSVQSG…EIKQKKVETV (124 aa)) is regulatory domain.

Belongs to the alpha-IPM synthase/homocitrate synthase family. LeuA type 1 subfamily. As to quaternary structure, homodimer. Requires Mn(2+) as cofactor.

It localises to the cytoplasm. It carries out the reaction 3-methyl-2-oxobutanoate + acetyl-CoA + H2O = (2S)-2-isopropylmalate + CoA + H(+). It functions in the pathway amino-acid biosynthesis; L-leucine biosynthesis; L-leucine from 3-methyl-2-oxobutanoate: step 1/4. Its function is as follows. Catalyzes the condensation of the acetyl group of acetyl-CoA with 3-methyl-2-oxobutanoate (2-ketoisovalerate) to form 3-carboxy-3-hydroxy-4-methylpentanoate (2-isopropylmalate). This Aliivibrio fischeri (strain MJ11) (Vibrio fischeri) protein is 2-isopropylmalate synthase.